Reading from the N-terminus, the 263-residue chain is Splicing regulator sde2 (263 aa).

The propeptide at 1–84 (MECKTVFLNG…LTLCTRVLGG (84 aa)) is UBL. 3 disordered regions span residues 95–118 (AGGR…LDGN), 137–158 (PAET…LAAD), and 194–263 (STSA…LYGL). The segment covering 102–117 (KRNEQENQDSCRDLDG) has biased composition (basic and acidic residues). Low complexity-rich tracts occupy residues 194–209 (STSA…GATT) and 219–230 (NNNSSINSWSRR).

It belongs to the SDE2 family. In terms of assembly, interacts with cay1/cactin. Interacts with prp19. Interacts with cwf12. Interacts with cdc5. In terms of processing, the N-terminal UBL (ubiquitin-like) propeptide is cleaved at Gly-84 by the deubiquitinating enzymes ubp5 and ubp15; the resulting mature sde2 associates with spliceosomes. Polyubiquitinated; ubiquitination is partially dependent on ubr11.

The protein resides in the cytoplasm. It localises to the nucleus. Plays a role in pre-mRNA splicing by facilitating excision of introns featuring relatively long (&gt;21 nucleotides) spacing between the branchpoint and 3'-splice site (ss). Recruits cactin to the spliceosome which may enable folding of RNA between the branchpoint and 3'-ss, to guide the splice site towards the spliceosome's catalytic center. Required for proper chromatin organization by assisting splicing of components involved in genomic stability and telomere organization. The chain is Splicing regulator sde2 from Schizosaccharomyces pombe (strain 972 / ATCC 24843) (Fission yeast).